Consider the following 447-residue polypeptide: Trimethylamine monooxygenase (447 aa).

The FAD site is built by serine 13, glutamate 38, glutamine 40, leucine 46, tryptophan 47, and histidine 63. Positions 71 and 73 each coordinate NADP(+). The FAD site is built by asparagine 73 and valine 126. Tyrosine 173, alanine 205, serine 206, serine 208, and arginine 229 together coordinate NADP(+). The FAD site is built by glutamine 318 and threonine 321. NADP(+) is bound at residue arginine 413.

Belongs to the FMO family. The cofactor is FAD.

The catalysed reaction is trimethylamine + NADPH + O2 = trimethylamine N-oxide + NADP(+) + H2O. In terms of biological role, catalyzes the oxidation of trimethylamine (TMA) to produce trimethylamine N-oxide (TMAO). TMA is the best substrate, but the enzyme can also oxidize methimazole, indole and dimethylamine (DMA). This is Trimethylamine monooxygenase from Roseovarius nubinhibens (strain ATCC BAA-591 / DSM 15170 / ISM).